The sequence spans 551 residues: MAAPALSWRLPLLILLLPLATPWASATVNGTSQFTCFYNSRANISCVWSQDGALQDTSCQVHAWPDRRRWNQTCELLPVSQASWACNLILGAPDSQKLTTVDIVTLRVLCREGVRWRVMAIQDFKPFENLRLMAPISLQVVHVETHRCNISWEISQASHYFERHLEFEARTLSPGHTWEEAPLLTLKQKQEWICLETLTPDTQYEFQVRVKPLQGEFTTWSPWSQPLAFRTKPASLGKDTIPWLGHLLVGLSGAFGFIILVYLLINCRNTGPWLKKVLKCHTPDPSKFFSQLSSEHGGDVQKWLSSPFPSSSFSPGGLAPEISPLEVLERDKVTQLLLQQDKVPEPASLSSNHSLTSCFTNQGYFFFHLPDALEIEACQVYFTYDPYAEEDADEGVAGAPTGSSPQPLQPLSGEDDTYCTFPSRDGLLLFSPSLLGGPSPPSTAPGGSGAGEERMPPSLQERVPRDWDPQPLGPPTPGVPDLVDFQPPPELVLREAGEEVPDAGPREGVSFPWSRPPGQGEFRALNARLPLNTDAYLSLQELQGQDPTHLV.

Positions 1–26 are cleaved as a signal peptide; sequence MAAPALSWRLPLLILLLPLATPWASA. Over 27 to 240 the chain is Extracellular; that stretch reads TVNGTSQFTC…TKPASLGKDT (214 aa). 3 N-linked (GlcNAc...) asparagine glycosylation sites follow: Asn-29, Asn-43, and Asn-71. Cys-36 and Cys-46 form a disulfide bridge. A disulfide bridge links Cys-74 with Cys-86. One can recognise a Fibronectin type-III domain in the interval 134–234; it reads APISLQVVHV…QPLAFRTKPA (101 aa). N-linked (GlcNAc...) asparagine glycosylation is present at Asn-149. Residues 220–224 carry the WSXWS motif motif; that stretch reads WSPWS. The helical transmembrane segment at 241–265 threads the bilayer; the sequence is IPWLGHLLVGLSGAFGFIILVYLLI. Residues 266-551 are Cytoplasmic-facing; sequence NCRNTGPWLK…LQGQDPTHLV (286 aa). The short motif at 278 to 286 is the Box 1 motif element; it reads LKCHTPDPS. Disordered stretches follow at residues 393–412 and 433–476; these read DEGV…QPLS and SLLG…GPPT.

It belongs to the type I cytokine receptor family. Type 4 subfamily. In terms of assembly, non-covalent dimer of an alpha and a beta subunit. IL2R exists in 3 different forms: a high affinity dimer, an intermediate affinity monomer (beta subunit), and a low affinity monomer (alpha subunit). The high and intermediate affinity forms also associate with a gamma subunit. Interacts with SHB upon interleukin stimulation.

Its subcellular location is the cell membrane. It localises to the cell surface. In terms of biological role, receptor for interleukin-2. This beta subunit is involved in receptor mediated endocytosis and transduces the mitogenic signals of IL2. Probably in association with IL15RA, involved in the stimulation of neutrophil phagocytosis by IL15. The chain is Interleukin-2 receptor subunit beta (IL2RB) from Pan troglodytes (Chimpanzee).